The sequence spans 270 residues: uncharacterized protein (270 aa).

The protein localises to the virion. This is an uncharacterized protein from Acanthamoeba polyphaga (Amoeba).